A 340-amino-acid chain; its full sequence is Nitrilase (340 aa).

Positions 7-273 constitute a CN hydrolase domain; that stretch reads IRAAAVQIAP…EGMVVADLDM (267 aa). Catalysis depends on glutamate 47, which acts as the Proton acceptor. The active site involves lysine 129. Cysteine 163 serves as the catalytic Nucleophile.

The protein belongs to the carbon-nitrogen hydrolase superfamily. Nitrilase family. As to quaternary structure, forms oligomers.

It catalyses the reaction a nitrile + 2 H2O = a carboxylate + NH4(+). The enzyme catalyses phenylpropanonitrile + 2 H2O = 3-phenylpropanoate + NH4(+). It carries out the reaction an aliphatic nitrile + 2 H2O = a carboxylate + NH4(+). With respect to regulation, highly resistant to various miscible cosolvents and tolerates high substrate concentrations. In terms of biological role, catalyzes the hydrolysis of a broad range of nitriles to yield their corresponding carboxylic acid and ammonia. In vitro, shows high activity toward benzylic/unsaturated nitriles. The preferred substrate is trans-cinnamonitrile, followed by mono/di-cyanopyridines and aromatic substituted nitriles, with a moderate activity toward 3-phenylpropionitrile. Shows weaker activity toward the common dinitrile fumaronitrile. Also shows weak activity toward some aliphatic nitriles, including adiponitrile and glutaronitrile, and the arylacetonitrile 2-thiopheneacetonitrile. The polypeptide is Nitrilase (Paraburkholderia phymatum (strain DSM 17167 / CIP 108236 / LMG 21445 / STM815) (Burkholderia phymatum)).